Here is a 117-residue protein sequence, read N- to C-terminus: Large ribosomal subunit protein uL18 (117 aa).

The protein belongs to the universal ribosomal protein uL18 family. As to quaternary structure, part of the 50S ribosomal subunit; part of the 5S rRNA/L5/L18/L25 subcomplex. Contacts the 5S and 23S rRNAs.

Functionally, this is one of the proteins that bind and probably mediate the attachment of the 5S RNA into the large ribosomal subunit, where it forms part of the central protuberance. The polypeptide is Large ribosomal subunit protein uL18 (Cronobacter sakazakii (strain ATCC BAA-894) (Enterobacter sakazakii)).